The following is a 566-amino-acid chain: F-box/WD repeat-containing protein 5 (566 aa).

An F-box domain is found at 3 to 49 (EGGTPLLPDSLVYQIFLSLGPADVLAAGLVCRQWQAVSRDEFLWREQ). WD repeat units follow at residues 83-125 (VEVQ…DLTI), 126-178 (SLLH…LDSF), 179-238 (ALLS…VKRL), and 239-281 (FKIQ…RIFD). Ser-151 is subject to Phosphoserine; by PLK4. The residue at position 284 (Ser-284) is a Phosphoserine. A D-box motif is present at residues 303–311 (RHFLDRVLE). 3 WD repeats span residues 394–447 (ALDH…DLLV), 458–501 (RALR…RHYN), and 502–539 (ICLA…KAWR).

The protein belongs to the FBXW5 family. In terms of assembly, part of the SCF (SKP1-CUL1-F-box) E3 ubiquitin-protein ligase complex SCF(FBXW5) composed of CUL1, SKP1, RBX1 and FBXW5. Component of the DCX(FBXW5) E3 ubiquitin ligase complex, at least composed of (CUL4A or CUL4B), DDB1, FBXW5 and RBX1. Interacts with CDC20, EPS8, TSC1, TSC2 and SASS6. Interacts with TNFAIP8L1; TNFAIP8L1 competes with TSC2 to bind FBXW5 increasing TSC2 stability by preventing its ubiquitination. In terms of processing, phosphorylated at Ser-151 by PLK4 during the G1/S transition, leading to inhibit its ability to ubiquitinate SASS6. Post-translationally, ubiquitinated and degraded by the APC/C complex during mitosis and G1 phase.

It localises to the cytoplasm. It functions in the pathway protein modification; protein ubiquitination. Functionally, substrate recognition component of both SCF (SKP1-CUL1-F-box protein) and DCX (DDB1-CUL4-X-box) E3 ubiquitin-protein ligase complexes. Substrate recognition component of the SCF(FBXW5) E3 ubiquitin-protein ligase complex which mediates the ubiquitination and subsequent proteasomal degradation of SASS6 during S phase, leading to prevent centriole reduplication. The SCF(FBXW5) complex also mediates ubiquitination and degradation of actin-regulator EPS8 during G2 phase, leading to the transient degradation of EPS8 and subsequent cell shape changes required to allow mitotic progression. Substrate-specific adapter of the DCX(FBXW5) E3 ubiquitin-protein ligase complex which mediates the polyubiquitination and subsequent degradation of TSC2. May also act as a negative regulator of MAP3K7/TAK1 signaling in the interleukin-1B (IL1B) signaling pathway. The protein is F-box/WD repeat-containing protein 5 (FBXW5) of Homo sapiens (Human).